Reading from the N-terminus, the 301-residue chain is Lufaxin (301 aa).

Residues 1 to 23 (MNSINFLSIVGLISFGFIVAVKC) form the signal peptide. 4 disulfide bridges follow: Cys-52–Cys-60, Cys-78–Cys-137, Cys-102–Cys-112, and Cys-258–Cys-265. An N-linked (GlcNAc...) asparagine glycan is attached at Asn-262.

In terms of assembly, interacts with factor Xa. Associates with complement proconvertase C3b-B complex. As to expression, expressed in salivary glands.

Its subcellular location is the secreted. Its function is as follows. Sand fly salivary protein with antithrombotic, and anti-complement (alternative pathway) activities. Is a slow, tight, non-competitive, and reversible inhibitor of factor Xa (FXa, F10). Is specific for FXa (Kd=3.86 nM) and does not interact with non-activated FX, or all other enzymes tested. In addition, it blocks prothrombinase and increases both prothrombin time and activated partial thromboplastin time. It also prevents protease-activated receptor 2 (F2RL1, PAR2) activation by FXa. In vivo, it abrogates edema formation triggered by injection of FXa in the paw of mice. Moreover, it prevents FeCl(3)-induced carotid artery thrombus formation and prolongs activated partial thromboplastin time ex vivo, implying that it works as an anticoagulant in vivo. It also inhibits the early steps of the alternative pathway of complement by direct binding to the proconvertase C3b-B complex, by inhibiting activation of factor B and consequently the formation of the C3 convertase. This is Lufaxin from Lutzomyia longipalpis (Sand fly).